The following is a 1509-amino-acid chain: Putative endo-alpha-N-acetylgalactosaminidase (1509 aa).

Positions 1 to 41 (MPFRGRRRQSALRGLSLAATFCLAAGSSGISGALFATPAQA) are cleaved as a signal peptide. The Ca(2+) site is built by Asp-288, Asn-290, Asp-292, Lys-294, and Asp-299. The segment at 313-585 (GGDDVKNRVV…NLPVKFLQQQ (273 aa)) is catalytic. Asp-369 lines the substrate pocket. The Nucleophile role is filled by Asp-472. The active-site Proton donor/acceptor is Glu-498. 4 residues coordinate Ca(2+): Asn-878, Glu-880, Asp-926, and Tyr-929. Disordered stretches follow at residues 1176–1197 (NGWGPVEKDQANGEQAQGDGPP) and 1403–1439 (IKAANPNPGTGSNPGTGSNPGTDPGTGSAGGNSSGGG). The span at 1407–1428 (NPNPGTGSNPGTGSNPGTDPGT) shows a compositional bias: low complexity. Over residues 1429–1439 (GSAGGNSSGGG) the composition is skewed to gly residues. Positions 1475-1479 (LAETG) match the LPXTG sorting signal motif. Position 1478 is a pentaglycyl murein peptidoglycan amidated threonine (Thr-1478). A propeptide spans 1479 to 1509 (GFSGLVLPLGIGLMLLLIGAAAIIVRRHRHS) (removed by sortase).

It belongs to the glycosyl hydrolase 101 family. A subfamily.

It localises to the secreted. Its subcellular location is the cell wall. The catalysed reaction is a 3-O-[beta-D-galactosyl-(1-&gt;3)-N-acetyl-alpha-D-galactosaminyl]-L-threonyl-[protein] + H2O = beta-D-galactosyl-(1-&gt;3)-N-acetyl-D-galactosamine + L-threonyl-[protein]. It carries out the reaction a 3-O-[beta-D-galactosyl-(1-&gt;3)-N-acetyl-alpha-D-galactosaminyl]-L-seryl-[protein] + H2O = beta-D-galactosyl-(1-&gt;3)-N-acetyl-D-galactosamine + L-seryl-[protein]. In terms of biological role, probably involved in the breakdown of mucin-type O-linked glycans. Specifically removes the T-antigen disaccharide (Gal-beta-1,3-GalNAc-alpha) from extracellular host glycoproteins. The polypeptide is Putative endo-alpha-N-acetylgalactosaminidase (Renibacterium salmoninarum (strain ATCC 33209 / DSM 20767 / JCM 11484 / NBRC 15589 / NCIMB 2235)).